The sequence spans 959 residues: MGLSEDLHARARTLMQTLESALNTPGSRGIGTANPTIYDTAWVAMVSREIDGKQVFVFPETFTYIYEHQEADGSWSGDGSLIDSIVNTLACLVALKMHESNASKPDIPARARAAQNYLDDALKRWDIMETERVAYEMIVPCLLKQLDAFGVSFTFPHHDLLYNMYAGKLAKLNWEAIYAKNSSLLHCMEAFVGVCDFDRMPHLLRDGNFMATPSTTAAYLMKATKWDDRAEDYLRHVIEVYAPHGRDVVPNLWPMTFFEIVWSLSSLYDNNLEFAQMDPECLDRIALKLREFLVAGKGVLGFVPGTTHDADMSSKTLMLLQVLNHPYSHDEFVTEFEAPTYFRCYSFERNASVTVNSNCLMSLLHAPDVNKYESQIVKIATYVADVWWTSAGVVKDKWNVSEWYSSMLSSQALVRLLFEHGKGNLKSISEELLSRVSIACFTMISRILQSQKPDGSWGCAEETSYALITLANVASLPTCDLIRDHLYKVIESAKAYLTPIFYARPAAKPEDRVWIDKVTYSVESFRDAYLVSALNVPIPRFDPSSISTLPAISQTLPKELSKFFGRLDMFKPAPEWRKLTWGIEATLMGPELNRVPSSTFAKVEKGAAGKWFEFLPYMTIAPSSLEGTPISSQGMLDVLVLIRGLYNTDDYLDMTLIKATNEDLDDLKKKIRDLFADPKSFSTLSEVPDDRMPTHIEVIERFAYSLLNHPRAQLASDNDKGLLRSEIEHYFLAGIAQCEENILLRERGLDKERIGTSHYRWTHVVGADNVAGTIALVFALCLLGHQINEERGSRDLVDVFPSPVLKYLFNDCVMHFGTFSRLANDLHSISRDFNEVNLNSIMFSEFTGPKSGTDTEKAREAALLELTKFERKATDDGFEYLVQQLTPHVGAKRARDYINIIRVTYLHTALYDDLGRLTRADISNANQEVSKGTNGVKKINGSSTNGTKVTANGSNGIHH.

The segment at 1–542 is class II diterpene cyclase; it reads MGLSEDLHAR…ALNVPIPRFD (542 aa). Residues 309–312 carry the DXDD motif motif; that stretch reads DADM. The active-site For class II diterpene cyclase activity is the aspartate 311. The interval 543-959 is class I diterpene synthase; it reads PSSISTLPAI…TANGSNGIHH (417 aa). Catalysis depends on aspartate 649, which acts as the For class I diterpene synthase activity. Mg(2+)-binding residues include aspartate 649, aspartate 653, and asparagine 824. The short motif at 649–653 is the DDXXD motif element; sequence DDYLD. The interval 931–959 is disordered; sequence KGTNGVKKINGSSTNGTKVTANGSNGIHH. Positions 940–959 are enriched in polar residues; it reads NGSSTNGTKVTANGSNGIHH.

Belongs to the terpene synthase family. Mg(2+) serves as cofactor.

It functions in the pathway secondary metabolite biosynthesis; terpenoid biosynthesis. In terms of biological role, bifunctional premutilin synthase; part of the gene cluster that mediates the biosynthesis of pleuromutilin, a tricyclic diterpene showing antibacterial properties. The geranylgeranyl diphosphate (GGPP) synthase catalyzes the first step in pleuromutilin biosynthesis. GGPP is then substrate of the premutilin synthase (PS) to yield premutilin. Premutilin synthase is a bifunctional enzyme composed of the fusion of a class II diterpene cyclase (DTC) and a class I diterpene synthase (DTS), with the corresponding domains and active sites containing characteristic aspartate-rich motifs. GGPP is first converted to mutildienyl-diphosphate (MPP) at the class II DTC site. MPP is subsequently further cyclized at the class I DTS site, followed by a 1,5-hydride shift and addition of water prior to terminating deprotonation, to yield premutilin. In addition to the aforementioned GGPP synthase and bifunctional diterpene synthase, the cluster also contains three cytochrome P450 monooxygenases, a short-chain alcohol dehydrogenase, and an acyltransferase, involved in the conversion of premutilin to pleuromutilin. The cytochrome P450 monooxygenases P450-1 and P450-2 hydroxylate premutilin at C-11 and C-3, respectively, producing 11-hydroxypremutilin and 3-hydroxypremutilin. The combination of the actions of both ple5 and ple6 leads to the production of 3,11-dihydroxypremutilin. The short chain dehydrogenase SDR further converts 3,11-dihydroxypremutilin into mutilin. The acetyltransferase ATF then acetylates mutilin to produce 14-O-acetylmutilin. Finally, the cytochrome P450 monooxygenase P450-3 catalyzes hydroxylation on the alpha position of the acetyl side chain of 14-O-acetylmutilin to yield pleuromutilin. This is Bifunctional premutilin synthase from Clitopilus passeckerianus (Pleurotus passeckerianus).